Consider the following 360-residue polypeptide: Probable dual-specificity RNA methyltransferase RlmN (360 aa).

Glu-91 (proton acceptor) is an active-site residue. The Radical SAM core domain maps to 97 to 335; it reads QHYGQSVCVT…CVVRQEHGTD (239 aa). An intrachain disulfide couples Cys-104 to Cys-340. Positions 111, 115, and 118 each coordinate [4Fe-4S] cluster. S-adenosyl-L-methionine is bound by residues 163–164, Ser-195, 218–220, and Asn-296; these read GE and SLH. The active-site S-methylcysteine intermediate is Cys-340.

Belongs to the radical SAM superfamily. RlmN family. [4Fe-4S] cluster serves as cofactor.

Its subcellular location is the cytoplasm. The catalysed reaction is adenosine(2503) in 23S rRNA + 2 reduced [2Fe-2S]-[ferredoxin] + 2 S-adenosyl-L-methionine = 2-methyladenosine(2503) in 23S rRNA + 5'-deoxyadenosine + L-methionine + 2 oxidized [2Fe-2S]-[ferredoxin] + S-adenosyl-L-homocysteine. It catalyses the reaction adenosine(37) in tRNA + 2 reduced [2Fe-2S]-[ferredoxin] + 2 S-adenosyl-L-methionine = 2-methyladenosine(37) in tRNA + 5'-deoxyadenosine + L-methionine + 2 oxidized [2Fe-2S]-[ferredoxin] + S-adenosyl-L-homocysteine. Specifically methylates position 2 of adenine 2503 in 23S rRNA and position 2 of adenine 37 in tRNAs. This Streptococcus equi subsp. zooepidemicus (strain MGCS10565) protein is Probable dual-specificity RNA methyltransferase RlmN.